We begin with the raw amino-acid sequence, 441 residues long: tRNA (guanine(37)-N(1))-methyltransferase (441 aa).

A mitochondrion-targeting transit peptide spans 1–9 (MFAPPAARA). S-adenosyl-L-methionine-binding positions include Arg-221, 248 to 249 (DL), 276 to 277 (DG), and Asn-331.

Belongs to the class I-like SAM-binding methyltransferase superfamily. TRM5/TYW2 family. Monomer.

Its subcellular location is the mitochondrion matrix. The protein resides in the nucleus. It localises to the cytoplasm. It carries out the reaction guanosine(37) in tRNA + S-adenosyl-L-methionine = N(1)-methylguanosine(37) in tRNA + S-adenosyl-L-homocysteine + H(+). Functionally, specifically methylates the N1 position of guanosine-37 in various cytoplasmic and mitochondrial tRNAs. Methylation is not dependent on the nature of the nucleoside 5' of the target nucleoside. This is the first step in the biosynthesis of wybutosine (yW), a modified base adjacent to the anticodon of tRNAs and required for accurate decoding. This is tRNA (guanine(37)-N(1))-methyltransferase from Phaeosphaeria nodorum (strain SN15 / ATCC MYA-4574 / FGSC 10173) (Glume blotch fungus).